A 137-amino-acid chain; its full sequence is uncharacterized protein (137 aa).

This sequence belongs to the ycf72 family.

The protein localises to the plastid. Its subcellular location is the chloroplast. This is an uncharacterized protein from Oryza nivara (Indian wild rice).